We begin with the raw amino-acid sequence, 250 residues long: DNA polymerase sliding clamp (250 aa).

Belongs to the PCNA family. As to quaternary structure, homotrimer. The subunits circularize to form a toroid; DNA passes through its center. Replication factor C (RFC) is required to load the toroid on the DNA.

Sliding clamp subunit that acts as a moving platform for DNA processing. Responsible for tethering the catalytic subunit of DNA polymerase and other proteins to DNA during high-speed replication. This Methanococcus maripaludis (strain C5 / ATCC BAA-1333) protein is DNA polymerase sliding clamp.